We begin with the raw amino-acid sequence, 228 residues long: Thermonuclease (228 aa).

Residues 1–23 (MTEYLLSAGICMAIVSILLIGMA) form the signal peptide. The propeptide occupies 24–60 (ISNVSKGQYAKRFFFFATSCLVLTLVVVSSLSSSANA). Residues 58–70 (ANASQTDNGVNRS) are compositionally biased toward polar residues. The disordered stretch occupies residues 58–83 (ANASQTDNGVNRSGSEDPTVYSATST). Asp100 contributes to the Ca(2+) binding site. The active site involves Arg114. The Ca(2+) site is built by Asp119 and Thr120. Residues Glu122 and Arg166 contribute to the active site.

Belongs to the thermonuclease family. It depends on Ca(2+) as a cofactor.

The protein localises to the secreted. The enzyme catalyses Endonucleolytic cleavage to nucleoside 3'-phosphates and 3'-phosphooligonucleotide end-products.. Its function is as follows. Enzyme that catalyzes the hydrolysis of both DNA and RNA at the 5' position of the phosphodiester bond. The protein is Thermonuclease (nuc) of Staphylococcus aureus (strain Mu50 / ATCC 700699).